A 1438-amino-acid polypeptide reads, in one-letter code: DNA polymerase III PolC-type (1438 aa).

Residues 422–578 (YVVFDVETTG…YDTESTAYIF (157 aa)) form the Exonuclease domain.

It belongs to the DNA polymerase type-C family. PolC subfamily.

The protein localises to the cytoplasm. It carries out the reaction DNA(n) + a 2'-deoxyribonucleoside 5'-triphosphate = DNA(n+1) + diphosphate. Its function is as follows. Required for replicative DNA synthesis. This DNA polymerase also exhibits 3' to 5' exonuclease activity. This Staphylococcus haemolyticus (strain JCSC1435) protein is DNA polymerase III PolC-type.